The sequence spans 432 residues: MALEQIDYEYQSGFGNSFESEAIKGTLPKGRNAPQNCPLDLYAEQLSGNAFTAPRHTQQRSWLYRIRPSVCHTPLKPIDSGLVCDLNNLHVDPNQLRWKPFPITEDKPHDFVEGLITIAGAGHASVRHGLAIHIYTATKSMENKSFYNSDGDFLIVPQQGTLDIQTEFGFMKVKSGEICVIQRGITFSVNVEGPTRGYICEVFGSHFKLPDLGPIGANGLANPRDFLSPVAAYEKKEGIEHTKINKFLGKLFSATQTYSPFNVVAWHGNYCPYKYDLSLFCVVNSVSFDHLDPSIFTVLTAPTNEVGVAAADFVIFPPRWLVQENTFRPPYFHRNCMSEFMGLIRGVYEAKKEGFLPGGGSLHSCMTPHGPDSDTFYAAIKAELKPTKIPDVALAFMFESSLILGISDYAKKNFIDDDYWKCWQGLKDNSKI.

Residues H333, E339, and H369 each contribute to the Fe cation site.

This sequence belongs to the homogentisate dioxygenase family. It depends on Fe cation as a cofactor.

It catalyses the reaction homogentisate + O2 = 4-maleylacetoacetate + H(+). It functions in the pathway amino-acid degradation; L-phenylalanine degradation; acetoacetate and fumarate from L-phenylalanine: step 4/6. The sequence is that of Homogentisate 1,2-dioxygenase (hgd) from Dictyostelium discoideum (Social amoeba).